The primary structure comprises 979 residues: Receptor-type tyrosine-protein phosphatase-like N (979 aa).

The first 37 residues, 1–37, serve as a signal peptide directing secretion; it reads MRRPRRPGGSGGSGGSGGLRLLVCLLLLSGRPGGCSA. The segment at 38-134 is RESP18 homology domain; it reads ISAHGCLFDR…HPRDRSGLVP (97 aa). The Lumenal segment spans residues 38–575; sequence ISAHGCLFDR…RQAHGISPMR (538 aa). An intrachain disulfide couples cysteine 56 to cysteine 65. The segment covering 113–130 has biased composition (basic and acidic residues); sequence MERIPRLRPPEPHPRDRS. Disordered stretches follow at residues 113–173, 289–330, and 392–443; these read MERI…GSPL, GRAR…AAQP, and MQRG…SSSV. The span at 145 to 155 shows a compositional bias: polar residues; the sequence is TQGNPTGSSPA. Residues 303–322 show a composition bias toward basic and acidic residues; the sequence is RAEDSSEGHEEEVLGGRGEK. Residues serine 307 and serine 308 each carry the phosphoserine modification. Residues 414 to 424 are compositionally biased toward polar residues; the sequence is SPASSEVQQVL. The interval 449–575 is sufficient for dimerization of proICA512; the sequence is SPLGQSQPTV…RQAHGISPMR (127 aa). 2 N-linked (GlcNAc...) asparagine glycosylation sites follow: asparagine 506 and asparagine 524. A helical membrane pass occupies residues 576 to 600; it reads SVLLTLVALAGVAGLLVALAVALCM. The tract at residues 601-732 is sufficient for dimerization of proICA512; it reads RHHSRQRDKE…PNTCAAAQDE (132 aa). Residues 601 to 979 are Cytoplasmic-facing; that stretch reads RHHSRQRDKE…VNAILKALPQ (379 aa). Residues 644 to 680 are disordered; it reads RAEGQPEPSRVSSVSSQFSDAAQASPSSHSSTPSWCE. The segment covering 648-677 has biased composition (low complexity); sequence QPEPSRVSSVSSQFSDAAQASPSSHSSTPS. In terms of domain architecture, Tyrosine-protein phosphatase spans 709–969; the sequence is LAKEWQALCA…EFALTAVAEE (261 aa). Lysine 754 participates in a covalent cross-link: Glycyl lysine isopeptide (Lys-Gly) (interchain with G-Cter in SUMO).

Belongs to the protein-tyrosine phosphatase family. Receptor class 8 subfamily. In terms of assembly, homodimer; shown for the unprocessed protein (proICA512) in the endoplasmic reticulum and resolved during protein maturation as ICA512-TMF seems to be predominantly monomeric in secretory granules; however, ICA512-CCF interacts with ICA512-TMF disrupting the ICA512-TMF:SNTB2 complex. The isolated lumenal RESP18 homology domain has been shown to form disulfide-linked homooligomers. Interacts (via cytoplasmic domain) with phosphorylated SNTB2; this protects PTPRN against cleavage by CAPN1 to produce ICA512-CCF. Dephosphorylation of SNTB2 upon insulin stimulation disrupts the interaction and results in PTPRN cleavage. Interacts with SNX19. ICA512-CCF interacts with PIAS4; in the nucleus. Interacts with STAT5B (phosphorylated); down-regulated by ICA512-CCF sumoylation; ICA512-CCF prevents STAT5B dephosphorylation; ICA512-CCF mediates interaction of STAT5B with PIAS4. Interacts (via RESP18 homology domain) with insulin and proinsulin. Interacts with PTPRN2, PTPRA and PTPRE. Subject to proteolytic cleavage at multiple sites. Subject to cleavage on a pair of basic residues. On exocytosis of secretory granules in pancreatic beta-cells ICA512-TMF is transiently inserted in the plasma-membrane and cleaved by mu-type calpain CPN1 to yield ICA512-CCF. Post-translationally, O-glycosylated. In terms of processing, N-glycosylated. Sumoylated at two sites including Lys-754. Sumoylation decreases interaction with STAT5. Detected in pituitary. Detected in brain (at protein level). Detected in brain. Weakly expressed in the colon, intestine, stomach and pancreas.

It is found in the membrane. Its subcellular location is the cytoplasmic vesicle. The protein resides in the secretory vesicle membrane. The protein localises to the perikaryon. It localises to the cell projection. It is found in the axon. Its subcellular location is the synapse. The protein resides in the cell membrane. The protein localises to the endosome. It localises to the nucleus. Functionally, plays a role in vesicle-mediated secretory processes. Required for normal accumulation of secretory vesicles in hippocampus, pituitary and pancreatic islets. Required for the accumulation of normal levels of insulin-containing vesicles and preventing their degradation. Plays a role in insulin secretion in response to glucose stimuli. Required for normal accumulation of the neurotransmitters norepinephrine, dopamine and serotonin in the brain. In females, but not in males, required for normal accumulation and secretion of pituitary hormones, such as luteinizing hormone (LH) and follicle-stimulating hormone (FSH). Seems to lack intrinsic enzyme activity. Required to maintain normal levels of renin expression and renin release. May regulate catalytic active protein-tyrosine phosphatases such as PTPRA through dimerization. Its function is as follows. ICA512-TMF regulates dynamics and exocytosis of insulin secretory granules (SGs); binding of ICA512-TMF to SNTB2/beta-2-syntrophin is proposed to restrain SGs mobility and exocytosis by tethering them to the actin cytoskeleton depending on UTRN; the function is inhibited by cytoplasmic ICA512-CFF dimerizing with ICA512-TMF and displacing SNTB2. In terms of biological role, ICA512-CCF translocated to the nucleus promotes expression of insulin and other granule-related genes; the function implicates binding to and regulating activity of STAT5B probably by preventing its dephosphorylation and potentially by inducing its sumoylation by recruiting PIAS4. Enhances pancreatic beta-cell proliferation by converging with signaling by STAT5B and STAT3. ICA512-CCF located in the cytoplasm regulates dynamics and exocytosis of insulin secretory granules (SGs) by dimerizing with ICA512-TMF and displacing SNTB2 thus enhancing SGs mobility and exocytosis. The polypeptide is Receptor-type tyrosine-protein phosphatase-like N (Ptprn) (Mus musculus (Mouse)).